A 109-amino-acid chain; its full sequence is Aquaporin-2 (109 aa).

The Cytoplasmic portion of the chain corresponds to 1 to 6 (SVAFSR). Residues 7-27 (AVLAEFLATLIFVFFGLGSAL) traverse the membrane as a helical segment. The Extracellular portion of the chain corresponds to 28-35 (SWPQALPS). The helical transmembrane segment at 36 to 54 (VLQIALAFGLAIGTLVQAL) threads the bilayer. Residues 55–59 (GHVSG) lie on the Cytoplasmic side of the membrane. An intramembrane region (discontinuously helical) is located at residues 60-69 (AHINPAVTVA). Residues 63–65 (NPA) carry the NPA 1 motif. Residues 70–80 (CLVGCHVSFLR) are Cytoplasmic-facing. The chain crosses the membrane as a helical span at residues 81–102 (AAFYVAAQLLGAVAGAAILHEI). Over 103–109 (TPPDVRG) the chain is Extracellular.

This sequence belongs to the MIP/aquaporin (TC 1.A.8) family. Homotetramer. Post-translationally, serine phosphorylation is necessary and sufficient for expression at the apical membrane. Endocytosis is not phosphorylation-dependent. In terms of processing, N-glycosylated.

The protein resides in the apical cell membrane. It is found in the basolateral cell membrane. Its subcellular location is the cell membrane. The protein localises to the cytoplasmic vesicle membrane. It localises to the golgi apparatus. The protein resides in the trans-Golgi network membrane. It catalyses the reaction H2O(in) = H2O(out). The enzyme catalyses glycerol(in) = glycerol(out). Functionally, forms a water-specific channel that provides the plasma membranes of renal collecting duct with high permeability to water, thereby permitting water to move in the direction of an osmotic gradient. Plays an essential role in renal water homeostasis. Could also be permeable to glycerol. The polypeptide is Aquaporin-2 (Dasypus novemcinctus (Nine-banded armadillo)).